A 274-amino-acid chain; its full sequence is Pyrroline-5-carboxylate reductase 3 (274 aa).

This sequence belongs to the pyrroline-5-carboxylate reductase family. As to quaternary structure, homodecamer; composed of 5 homodimers.

It is found in the cytoplasm. The enzyme catalyses L-proline + NADP(+) = (S)-1-pyrroline-5-carboxylate + NADPH + 2 H(+). The catalysed reaction is L-proline + NAD(+) = (S)-1-pyrroline-5-carboxylate + NADH + 2 H(+). The protein operates within amino-acid biosynthesis; L-proline biosynthesis; L-proline from L-glutamate 5-semialdehyde: step 1/1. Its function is as follows. Oxidoreductase that catalyzes the last step in proline biosynthesis, which corresponds to the reduction of pyrroline-5-carboxylate (P5C) to L-proline using NAD(P)H. Proline is synthesized from either glutamate or ornithine; both are converted to P5C, and then to proline via pyrroline-5-carboxylate reductases (PYCRs). PYCR3 is exclusively linked to the biosynthesis of proline from ornithine. This chain is Pyrroline-5-carboxylate reductase 3, found in Xenopus laevis (African clawed frog).